The chain runs to 606 residues: R-linalool synthase, chloroplastic (606 aa).

Residues 1 to 51 constitute a chloroplast transit peptide; the sequence is MCTIISVNHHHVAILSKPKVKLFHTKNKRSASINLPWSLSPSSSAASRPIS. Residues Arg-326, Asp-363, Asp-367, Arg-504, and Asp-507 each coordinate (2E)-geranyl diphosphate. Asp-363 and Asp-367 together coordinate Mg(2+). A DDXXD motif motif is present at residues 363 to 367; it reads DDVYD. Asp-507, Thr-511, and Glu-515 together coordinate Mg(2+).

This sequence belongs to the terpene synthase family. Tpsb subfamily. The cofactor is Mg(2+). Requires Mn(2+) as cofactor.

It is found in the plastid. The protein resides in the chloroplast. It catalyses the reaction (2E)-geranyl diphosphate + H2O = (R)-linalool + diphosphate. It functions in the pathway secondary metabolite biosynthesis; terpenoid biosynthesis. Its function is as follows. Monoterpene synthase that catalyzes the formation of (3R)-linalool from geranyl diphosphate, but not from farnesyl diphosphate or geranylgeranyl diphosphate. This is R-linalool synthase, chloroplastic from Mentha aquatica (Water mint).